A 139-amino-acid chain; its full sequence is Ribonuclease VapC39 (139 aa).

Residues 4–133 form the PINc domain; the sequence is LLDVNVLIAL…DAALADSASA (130 aa). 2 residues coordinate Mg(2+): D6 and D106.

This sequence belongs to the PINc/VapC protein family. Mg(2+) serves as cofactor.

Its function is as follows. Toxic component of a type II toxin-antitoxin (TA) system. An RNase. Its toxic effect is neutralized by coexpression with cognate antitoxin VapB39. The chain is Ribonuclease VapC39 from Mycobacterium tuberculosis (strain CDC 1551 / Oshkosh).